The chain runs to 527 residues: Endogenous retrovirus group FC1 member 1 Env polyprotein (527 aa).

The surface protein stretch occupies residues 1–411; the sequence is MNSPCDRLQQ…EPRPQNKSKW (411 aa). The CXXC signature appears at 280-283; that stretch reads CFLC. A fusion peptide region spans residues 412–432; it reads AIFLPLVLGISLASSLVASGL. The tract at residues 412-527 is transmembrane protein; the sequence is AIFLPLVLGI…LKKKKSSKRS (116 aa). Residues 477-493 carry the CKS-17 motif; that stretch reads AQNRQALDLLMAEKGRT. A disulfide bridge connects residues cysteine 494 and cysteine 501. The CX6CC signature appears at 494-502; the sequence is CLFLQEECC.

The protein belongs to the gamma type-C retroviral envelope protein family. HERV class-I F(c)2 env subfamily. In terms of processing, the CXXC motif is highly conserved across a broad range of retroviral envelope proteins. It is thought to participate in the formation of a labile disulfide bond possibly with the CX6CC motif present in the transmembrane domain. In terms of tissue distribution, low expression in skin and testis.

The protein localises to the virion. Functionally, retroviral envelope proteins mediate receptor recognition and membrane fusion during early infection. Endogenous envelope proteins may have kept, lost or modified their original function during evolution. This endogenous envelope protein has lost its original fusogenic properties. This Homo sapiens (Human) protein is Endogenous retrovirus group FC1 member 1 Env polyprotein (ERVFC1-1).